We begin with the raw amino-acid sequence, 1370 residues long: DNA-directed RNA polymerase subunit beta (1370 aa).

Belongs to the RNA polymerase beta chain family. As to quaternary structure, the RNAP catalytic core consists of 2 alpha, 1 beta, 1 beta' and 1 omega subunit. When a sigma factor is associated with the core the holoenzyme is formed, which can initiate transcription.

The enzyme catalyses RNA(n) + a ribonucleoside 5'-triphosphate = RNA(n+1) + diphosphate. DNA-dependent RNA polymerase catalyzes the transcription of DNA into RNA using the four ribonucleoside triphosphates as substrates. In Delftia acidovorans (strain DSM 14801 / SPH-1), this protein is DNA-directed RNA polymerase subunit beta.